We begin with the raw amino-acid sequence, 238 residues long: Pyridoxine 5'-phosphate synthase (238 aa).

Residues Asn7 and Arg18 each coordinate 3-amino-2-oxopropyl phosphate. His43 (proton acceptor) is an active-site residue. 2 residues coordinate 1-deoxy-D-xylulose 5-phosphate: Arg45 and His50. Catalysis depends on Glu70, which acts as the Proton acceptor. A 1-deoxy-D-xylulose 5-phosphate-binding site is contributed by Thr100. His190 serves as the catalytic Proton donor. 3-amino-2-oxopropyl phosphate-binding positions include Asp191 and 213–214; that span reads GH.

This sequence belongs to the PNP synthase family. Homooctamer; tetramer of dimers.

Its subcellular location is the cytoplasm. The enzyme catalyses 3-amino-2-oxopropyl phosphate + 1-deoxy-D-xylulose 5-phosphate = pyridoxine 5'-phosphate + phosphate + 2 H2O + H(+). The protein operates within cofactor biosynthesis; pyridoxine 5'-phosphate biosynthesis; pyridoxine 5'-phosphate from D-erythrose 4-phosphate: step 5/5. In terms of biological role, catalyzes the complicated ring closure reaction between the two acyclic compounds 1-deoxy-D-xylulose-5-phosphate (DXP) and 3-amino-2-oxopropyl phosphate (1-amino-acetone-3-phosphate or AAP) to form pyridoxine 5'-phosphate (PNP) and inorganic phosphate. The sequence is that of Pyridoxine 5'-phosphate synthase from Porphyromonas gingivalis (strain ATCC 33277 / DSM 20709 / CIP 103683 / JCM 12257 / NCTC 11834 / 2561).